The chain runs to 448 residues: Phosphoglucosamine mutase (448 aa).

The Phosphoserine intermediate role is filled by S102. Mg(2+) contacts are provided by S102, D242, D244, and D246. S102 is subject to Phosphoserine.

Belongs to the phosphohexose mutase family. Mg(2+) is required as a cofactor. Post-translationally, activated by phosphorylation.

The enzyme catalyses alpha-D-glucosamine 1-phosphate = D-glucosamine 6-phosphate. Its function is as follows. Catalyzes the conversion of glucosamine-6-phosphate to glucosamine-1-phosphate. The chain is Phosphoglucosamine mutase from Brevibacillus brevis (strain 47 / JCM 6285 / NBRC 100599).